The chain runs to 234 residues: MNNIDQTELDKFEKMAATWWDPNGSFKPIHLLNPLRLDYIQQKANGLFGKKVLDVGCGGGILSEAMARAGATVTGIDMTTEPLEVARKHAEENGLSIDYRQTTIEDFVQNQTACHAEKFDVITCMEMLEHVPDPLSIIQSCKALLKPDGVLFFSTINRTLKAYMLVIIGAEYVLKMLPKGTHEFEKFIKPAELLNWCDMADLRCQEMKGYHFNPVTEKFWLNNDVSCNYIAMLK.

Residues Arg36, Gly56, Asp77, and Met125 each coordinate S-adenosyl-L-methionine.

The protein belongs to the methyltransferase superfamily. UbiG/COQ3 family.

It carries out the reaction a 3-demethylubiquinol + S-adenosyl-L-methionine = a ubiquinol + S-adenosyl-L-homocysteine + H(+). It catalyses the reaction a 3-(all-trans-polyprenyl)benzene-1,2-diol + S-adenosyl-L-methionine = a 2-methoxy-6-(all-trans-polyprenyl)phenol + S-adenosyl-L-homocysteine + H(+). The protein operates within cofactor biosynthesis; ubiquinone biosynthesis. Functionally, O-methyltransferase that catalyzes the 2 O-methylation steps in the ubiquinone biosynthetic pathway. This chain is Ubiquinone biosynthesis O-methyltransferase, found in Actinobacillus pleuropneumoniae serotype 5b (strain L20).